A 363-amino-acid chain; its full sequence is Cyanuric acid amidohydrolase (363 aa).

The RU A stretch occupies residues 1–104 (MYHIDVFRIP…TVFARRPAID (104 aa)). Substrate contacts are provided by residues Arg52 and 83–84 (SG). The interval 112-249 (RLTLGIAFTR…NVVIAIGMSE (138 aa)) is RU B. Residue Lys162 is part of the active site. Residues Arg194 and 232-233 (SA) each bind substrate. Catalysis depends on Ser232, which acts as the Nucleophile. Residues 255-363 (LVIAHGVMSD…GGPFAVIARA (109 aa)) are RU C. Mg(2+) is bound at residue Glu297. Substrate contacts are provided by residues Arg324 and 343-344 (SG). Mg(2+) contacts are provided by Ala346, Gln349, Gly350, Pro351, and Gly354.

The protein belongs to the cyclic amide hydrolase (CyAH) family. Homotetramer.

It carries out the reaction cyanurate + H2O = 1-carboxybiuret + H(+). The protein operates within xenobiotic degradation; atrazine degradation; biuret from cyanurate: step 1/1. Its activity is regulated as follows. Inhibited by barbituric acid. Functionally, responsible for the hydrolysis of cyanuric acid, an intermediate formed during catabolism of s-triazine based compounds in herbicides such as atrazine and polymers such as melamine. Catalyzes the hydrolytic opening of the s-triazine ring of cyanuric acid (2,4,6-trihydroxy-s-triazine) to yield carbon dioxide and carboxybiuret, which spontaneously decarboxylates to biuret. This is Cyanuric acid amidohydrolase (atzD) from Pseudomonas sp. (strain ADP).